The following is a 419-amino-acid chain: Vascular endothelial growth factor C (419 aa).

Positions 1–31 are cleaved as a signal peptide; it reads MHLLGFFSVACSLLAAALLPGPREAPAAAAA. A propeptide spans 32 to 111 (or 102); the sequence is FESGLDLSDA…RTEETIKFAA (80 aa). Cystine bridges form between C131/C173, C162/C209, and C166/C211. N-linked (GlcNAc...) asparagine glycosylation is found at N175, N205, and N240. Residues 228-419 constitute a propeptide that is removed on maturation; it reads SLPATLPQCQ…PSYWKRPQMS (192 aa). Tandem repeats lie at residues 280–295, 304–319, 328–343, and 347–362. Positions 280-362 are 4 X 16 AA repeats of C-X(10)-C-X-C-X(1,3)-C; the sequence is CGPNKELDEE…LNPGKCACEC (83 aa).

The protein belongs to the PDGF/VEGF growth factor family. In terms of assembly, homodimer; non-covalent and antiparallel. Interacts with FLT4/VEGFR3; the interaction is required for FLT4/VEGFR3 homodimarization and activation. Post-translationally, undergoes a complex proteolytic maturation which generates a variety of processed secreted forms with increased activity toward VEGFR-3, but only the fully processed form could activate VEGFR-2. VEGF-C first form an antiparallel homodimer linked by disulfide bonds. Before secretion, a cleavage occurs between Arg-227 and Ser-228 producing a heterotetramer. The next extracellular step of the processing removes the N-terminal propeptide. Finally the mature VEGF-C is composed mostly of two VEGF homology domains (VHDs) bound by non-covalent interactions. Expressed in the spleen. Expressed in the lymph node, thymus, appendix and bone marrow. Expressed in the heart, placenta, skeletal muscle, ovary and small intestine. Expressed in the prostate, testis and colon.

The protein localises to the secreted. In terms of biological role, growth factor active in angiogenesis, and endothelial cell growth, stimulating their proliferation and migration and also has effects on the permeability of blood vessels. May function in angiogenesis of the venous and lymphatic vascular systems during embryogenesis, and also in the maintenance of differentiated lymphatic endothelium in adults. Binds and activates KDR/VEGFR2 and FLT4/VEGFR3 receptors. In Homo sapiens (Human), this protein is Vascular endothelial growth factor C (VEGFC).